Reading from the N-terminus, the 251-residue chain is GTP cyclohydrolase FolE2 (251 aa).

It belongs to the GTP cyclohydrolase IV family.

The catalysed reaction is GTP + H2O = 7,8-dihydroneopterin 3'-triphosphate + formate + H(+). Its pathway is cofactor biosynthesis; 7,8-dihydroneopterin triphosphate biosynthesis; 7,8-dihydroneopterin triphosphate from GTP: step 1/1. Converts GTP to 7,8-dihydroneopterin triphosphate. The sequence is that of GTP cyclohydrolase FolE2 from Desulfotalea psychrophila (strain LSv54 / DSM 12343).